A 224-amino-acid chain; its full sequence is Small ribosomal subunit protein uS3 (224 aa).

Positions 38 to 106 constitute a KH type-2 domain; the sequence is IRKFISEKLK…QVHINIVEIK (69 aa).

This sequence belongs to the universal ribosomal protein uS3 family. In terms of assembly, part of the 30S ribosomal subunit. Forms a tight complex with proteins S10 and S14.

Binds the lower part of the 30S subunit head. Binds mRNA in the 70S ribosome, positioning it for translation. The chain is Small ribosomal subunit protein uS3 from Lactobacillus acidophilus (strain ATCC 700396 / NCK56 / N2 / NCFM).